The sequence spans 488 residues: Auxin transporter-like protein 1 (488 aa).

The disordered stretch occupies residues 1–36 (MSGEKQAEESIVVSGEDEVAGRKVEDSAAEEDIDGN). Over 1–64 (MSGEKQAEES…DAWFSCASNQ (64 aa)) the chain is Cytoplasmic. Residues 65–82 (VAQVLLTLPYSFSQLGML) form a helical membrane-spanning segment. The Extracellular segment spans residues 83–84 (SG). Residues 85–105 (ILLQIFYGLMGSWTAYLISVL) traverse the membrane as a helical segment. Topologically, residues 106-141 (YVEYRARMEKQEAKSFKNHVIQWFEVLDGLLGPYWK) are cytoplasmic. A helical transmembrane segment spans residues 142–162 (AAGLAFNCTFLLFGSVIQLIA). The Extracellular segment spans residues 163–178 (CASNIYYINDRLDKRT). Residues 179–199 (WTYIFGACCATTVFIPSFHNY) traverse the membrane as a helical segment. The Cytoplasmic segment spans residues 200 to 202 (RIW). A helical transmembrane segment spans residues 203–223 (SFLGLGMTTYTAWYLTIASFL). Residues 224–238 (HGQAEGVTHSGPTKL) are Extracellular-facing. The helical transmembrane segment at 239-259 (VLYFTGATNILYTFGGHAVTV) threads the bilayer. Residues 260–273 (EIMHAMWKPRKFKS) lie on the Cytoplasmic side of the membrane. A helical transmembrane segment spans residues 274–294 (IYLMATLYVFTLTLPSASAVY). Residues 295 to 320 (WAFGDQLLNHSNAFSLLPKTRFRDTA) lie on the Extracellular side of the membrane. N303 carries an N-linked (GlcNAc...) asparagine glycan. Residues 321–341 (VILMLIHQFITFGFACTPLYF) form a helical membrane-spanning segment. Topologically, residues 342 to 362 (VWEKAIGMHHTKSLCLRALVR) are cytoplasmic. A helical membrane pass occupies residues 363–383 (LPVVVPIWFLAIIFPFFGPIN). Residue S384 is a topological domain, extracellular. A helical transmembrane segment spans residues 385 to 405 (AVGALLVTFTVYIIPALAHML). At 406–427 (TYRTASARRNAAEKPPFFIPSW) the chain is on the cytoplasmic side. A helical transmembrane segment spans residues 428–448 (AGVYVINAFIVVWVLVLGFGF). At 449 to 488 (GGWASMTNFIRQIDTFGLFAKCYQCKPPPAPIAAGAHHRR) the chain is on the extracellular side.

The protein belongs to the amino acid/polyamine transporter 2 family. Amino acid/auxin permease (AAAP) (TC 2.A.18.1) subfamily.

It is found in the cell membrane. Its function is as follows. Carrier protein involved in proton-driven auxin influx. Mediates the formation of auxin gradient from developing leaves (site of auxin biosynthesis) to tips by contributing to the loading of auxin in vascular tissues and facilitating acropetal (base to tip) auxin transport within inner tissues of the root apex, and basipetal (tip to base) auxin transport within outer tissues of the root apex. The sequence is that of Auxin transporter-like protein 1 (LAX1) from Arabidopsis thaliana (Mouse-ear cress).